The following is a 424-amino-acid chain: Histidinol dehydrogenase (424 aa).

NAD(+) contacts are provided by tyrosine 124, glutamine 186, and asparagine 209. 3 residues coordinate substrate: serine 232, glutamine 254, and histidine 257. Zn(2+) contacts are provided by glutamine 254 and histidine 257. Active-site proton acceptor residues include glutamate 322 and histidine 323. Substrate-binding residues include histidine 323, aspartate 356, glutamate 410, and histidine 415. Aspartate 356 contacts Zn(2+). Histidine 415 is a binding site for Zn(2+).

This sequence belongs to the histidinol dehydrogenase family. It depends on Zn(2+) as a cofactor.

The catalysed reaction is L-histidinol + 2 NAD(+) + H2O = L-histidine + 2 NADH + 3 H(+). Its pathway is amino-acid biosynthesis; L-histidine biosynthesis; L-histidine from 5-phospho-alpha-D-ribose 1-diphosphate: step 9/9. In terms of biological role, catalyzes the sequential NAD-dependent oxidations of L-histidinol to L-histidinaldehyde and then to L-histidine. This is Histidinol dehydrogenase from Moorella thermoacetica (strain ATCC 39073 / JCM 9320).